The chain runs to 272 residues: Ras-related protein RSR1 (272 aa).

10–17 contributes to the GTP binding site; that stretch reads GAGGVGKS. Positions 32–40 match the Effector region motif; sequence YDPTIEDSY. GTP contacts are provided by residues 57–61 and 116–119; these read DTAGI and NKAD. The interval 177-272 is disordered; sequence DARNQSQQFS…KKNASTCTIL (96 aa). Polar residues-rich tracts occupy residues 180-232 and 245-258; these read NQSQ…STPV and SGSS…ATSQ. Cys-269 carries the post-translational modification Cysteine methyl ester. Cys-269 carries S-geranylgeranyl cysteine lipidation. Residues 270–272 constitute a propeptide, removed in mature form; the sequence is TIL.

This sequence belongs to the small GTPase superfamily. Ras family.

The protein resides in the cell membrane. It carries out the reaction GTP + H2O = GDP + phosphate + H(+). Alternates between an inactive form bound to GDP and an active form bound to GTP. Activated by a guanine nucleotide-exchange factor (GEF) and inactivated by a GTPase-activating protein (GAP). Its function is as follows. Ras-related protein which binds GDP/GTP and possesses intrinsic GTPase activity. Involved in development of cell polarity during the cell division cycle, and essential for bud emergence. The sequence is that of Ras-related protein RSR1 from Saccharomyces cerevisiae (strain ATCC 204508 / S288c) (Baker's yeast).